We begin with the raw amino-acid sequence, 322 residues long: Undecaprenyl-phosphate 4-deoxy-4-formamido-L-arabinose transferase (322 aa).

At 1–235 the chain is on the cytoplasmic side; it reads MFEIHPVKKV…TCLTTTPLRM (235 aa). A helical membrane pass occupies residues 236-256; that stretch reads LSLLGSIIAIGGFSIAVLLVI. At 257–269 the chain is on the periplasmic side; the sequence is LRLTFGPQWAAEG. A helical transmembrane segment spans residues 270-290; the sequence is VFMLFAVLFTFIGAQFIGMGL. The Cytoplasmic portion of the chain corresponds to 291–322; that stretch reads LGEYIGRIYTDVRARPRYFVQQVIRPSSKENE.

Belongs to the glycosyltransferase 2 family.

It is found in the cell inner membrane. The enzyme catalyses UDP-4-deoxy-4-formamido-beta-L-arabinose + di-trans,octa-cis-undecaprenyl phosphate = 4-deoxy-4-formamido-alpha-L-arabinopyranosyl di-trans,octa-cis-undecaprenyl phosphate + UDP. Its pathway is glycolipid biosynthesis; 4-amino-4-deoxy-alpha-L-arabinose undecaprenyl phosphate biosynthesis; 4-amino-4-deoxy-alpha-L-arabinose undecaprenyl phosphate from UDP-4-deoxy-4-formamido-beta-L-arabinose and undecaprenyl phosphate: step 1/2. It functions in the pathway bacterial outer membrane biogenesis; lipopolysaccharide biosynthesis. In terms of biological role, catalyzes the transfer of 4-deoxy-4-formamido-L-arabinose from UDP to undecaprenyl phosphate. The modified arabinose is attached to lipid A and is required for resistance to polymyxin and cationic antimicrobial peptides. The chain is Undecaprenyl-phosphate 4-deoxy-4-formamido-L-arabinose transferase from Escherichia coli O45:K1 (strain S88 / ExPEC).